The following is a 123-amino-acid chain: Small ribosomal subunit protein uS12 (123 aa).

The tract at residues 1–21 (MPTIEQLVRKGRQAKPKKSKT) is disordered. The span at 9-20 (RKGRQAKPKKSK) shows a compositional bias: basic residues. D89 is modified (3-methylthioaspartic acid).

This sequence belongs to the universal ribosomal protein uS12 family. As to quaternary structure, part of the 30S ribosomal subunit. Contacts proteins S8 and S17. May interact with IF1 in the 30S initiation complex.

Its function is as follows. With S4 and S5 plays an important role in translational accuracy. Interacts with and stabilizes bases of the 16S rRNA that are involved in tRNA selection in the A site and with the mRNA backbone. Located at the interface of the 30S and 50S subunits, it traverses the body of the 30S subunit contacting proteins on the other side and probably holding the rRNA structure together. The combined cluster of proteins S8, S12 and S17 appears to hold together the shoulder and platform of the 30S subunit. This Bifidobacterium adolescentis (strain ATCC 15703 / DSM 20083 / NCTC 11814 / E194a) protein is Small ribosomal subunit protein uS12.